The sequence spans 358 residues: Probable dual-specificity RNA methyltransferase RlmN 2 (358 aa).

Residue Glu90 is the Proton acceptor of the active site. A Radical SAM core domain is found at 96–328 (SGIRRTVCVS…VNTCRYTKGD (233 aa)). An intrachain disulfide couples Cys103 to Cys334. Positions 110, 114, and 117 each coordinate [4Fe-4S] cluster. Residues 160–161 (GE), Ser192, 215–217 (SLH), and Asn291 each bind S-adenosyl-L-methionine. The active-site S-methylcysteine intermediate is the Cys334.

This sequence belongs to the radical SAM superfamily. RlmN family. It depends on [4Fe-4S] cluster as a cofactor.

It is found in the cytoplasm. The catalysed reaction is adenosine(2503) in 23S rRNA + 2 reduced [2Fe-2S]-[ferredoxin] + 2 S-adenosyl-L-methionine = 2-methyladenosine(2503) in 23S rRNA + 5'-deoxyadenosine + L-methionine + 2 oxidized [2Fe-2S]-[ferredoxin] + S-adenosyl-L-homocysteine. It carries out the reaction adenosine(37) in tRNA + 2 reduced [2Fe-2S]-[ferredoxin] + 2 S-adenosyl-L-methionine = 2-methyladenosine(37) in tRNA + 5'-deoxyadenosine + L-methionine + 2 oxidized [2Fe-2S]-[ferredoxin] + S-adenosyl-L-homocysteine. Functionally, specifically methylates position 2 of adenine 2503 in 23S rRNA and position 2 of adenine 37 in tRNAs. The protein is Probable dual-specificity RNA methyltransferase RlmN 2 of Protochlamydia amoebophila (strain UWE25).